A 251-amino-acid chain; its full sequence is MTNVGEQLKKKPMLRGGGFTFKQFFVAHDRCAMKVGTDGVLLGAWVPVEKARKVLDIGCGSGLIALMIAQRSTPEVMIDGVELEPEAAQQASSNAAQSPWAERVHIYQQDVHQFAENHLHQYDLIVSNPPYFAPAVACRDEARDTARYTGSLTHDALLNCAEKLITEDGIFCVVLPHDLGEELSRLAVQQNWFIRCQVDIRDRPGKPLHRILLTLSRQAGETEFQQLDLRQSEGVYSPEFCALISDFYLNY.

Belongs to the methyltransferase superfamily. tRNA (adenine-N(6)-)-methyltransferase family.

The protein localises to the cytoplasm. The enzyme catalyses adenosine(37) in tRNA1(Val) + S-adenosyl-L-methionine = N(6)-methyladenosine(37) in tRNA1(Val) + S-adenosyl-L-homocysteine + H(+). Its function is as follows. Specifically methylates the adenine in position 37 of tRNA(1)(Val) (anticodon cmo5UAC). This Yersinia enterocolitica serotype O:8 / biotype 1B (strain NCTC 13174 / 8081) protein is tRNA1(Val) (adenine(37)-N6)-methyltransferase.